The primary structure comprises 234 residues: FAS1 domain-containing protein AFUA_8G05360 (234 aa).

Residues 1–21 form the signal peptide; it reads MRRTLFVLFVVAFCFIGSVIA. The FAS1 domain maps to 83 to 231; that stretch reads KPVVSDVLPK…GELWILNSVL (149 aa).

It localises to the vacuole. The polypeptide is FAS1 domain-containing protein AFUA_8G05360 (Aspergillus fumigatus (strain ATCC MYA-4609 / CBS 101355 / FGSC A1100 / Af293) (Neosartorya fumigata)).